The primary structure comprises 239 residues: Ribosomal RNA small subunit methyltransferase G (239 aa).

S-adenosyl-L-methionine contacts are provided by residues Gly-77, Phe-82, 128–129, and Arg-147; that span reads AE. Positions 219 to 239 are disordered; that stretch reads KNTPKKYPRKPGTPNKSPIEG.

The protein belongs to the methyltransferase superfamily. RNA methyltransferase RsmG family.

It localises to the cytoplasm. Functionally, specifically methylates the N7 position of guanine in position 535 of 16S rRNA. The polypeptide is Ribosomal RNA small subunit methyltransferase G (Bacillus subtilis (strain 168)).